Reading from the N-terminus, the 834-residue chain is Inner nuclear membrane protein SRC1 (834 aa).

The tract at residues 68-292 is disordered; that stretch reads DEGIVKMDRP…TANGTGHSTP (225 aa). Over residues 77 to 86 the composition is skewed to low complexity; sequence PSSSPSIASP. Residues Ser78, Ser80, and Ser85 each carry the phosphoserine modification. 2 stretches are compositionally biased toward acidic residues: residues 114–127 and 142–153; these read VSNDDDDDDDDDDD and DTDEVDDEEDDV. The span at 154 to 170 shows a compositional bias: polar residues; that stretch reads ITSSSNKSDTNDFQQNS. Ser181 is modified (phosphoserine). The span at 188–198 shows a compositional bias: basic and acidic residues; the sequence is NSKENKIDNKH. A phosphoserine mark is found at Ser203, Ser204, and Ser206. The span at 243–266 shows a compositional bias: polar residues; sequence IKNTNRKPVSMDNFNDSLTSSGTE. Ser301 is subject to Phosphoserine. A disordered region spans residues 307–364; the sequence is PQKEVPSTILVPEVEQQEPSQSERTPSLFSSEGSGSESEAPLLPEITTPGPHQPMGNT. 2 stretches are compositionally biased toward low complexity: residues 317 to 329 and 336 to 345; these read VPEVEQQEPSQSE and SSEGSGSESE. Thr394 is subject to Phosphothreonine. Ser427 carries the phosphoserine modification. The next 2 helical transmembrane spans lie at 455–475 and 708–728; these read LLALFLFCIFIVIPLLFGLWY and IWLMFLLIVISKVIEIKLKNY.

It is found in the nucleus inner membrane. Plays a role in sister chromatid separation. The protein is Inner nuclear membrane protein SRC1 (SRC1) of Saccharomyces cerevisiae (strain ATCC 204508 / S288c) (Baker's yeast).